Consider the following 1647-residue polypeptide: Nucleoporin nup186 (1647 aa).

It belongs to the NUP186/NUP192/NUP205 family.

It localises to the cytoplasm. The protein resides in the nucleus. Functions as a component of the nuclear pore complex (NPC). NPC components, collectively referred to as nucleoporins (NUPs), can play the role of both NPC structural components and of docking or interaction partners for transiently associated nuclear transport factors. Active directional transport is assured by both, a Phe-Gly (FG) repeat affinity gradient for these transport factors across the NPC and a transport cofactor concentration gradient across the nuclear envelope. In Schizosaccharomyces pombe (strain 972 / ATCC 24843) (Fission yeast), this protein is Nucleoporin nup186 (nup186).